Reading from the N-terminus, the 173-residue chain is Trafficking regulator of GLUT4 1 (173 aa).

A compositionally biased stretch (pro residues) spans 1–10 (MANPAQPPLQ). Residues 1–20 (MANPAQPPLQDPGSTSPLEL) are disordered. Over 1-102 (MANPAQPPLQ…QDQEAPKDYL (102 aa)) the chain is Cytoplasmic. 6 positions are modified to phosphoserine: S16, S43, S45, S70, S84, and S85. An intramembrane region (helical) is located at residues 103–123 (VLAIASCFCPVWPLNLIPLIF). Residues 124-150 (SIMSRSSVQQGDLDGARRLGRLARLLS) lie on the Cytoplasmic side of the membrane. A helical membrane pass occupies residues 151 to 171 (ITFIILGIVIIIVAVTVNFTV). Residues 172-173 (PK) lie on the Extracellular side of the membrane.

The protein belongs to the CD225/Dispanin family. Interacts with SLC2A4; the interaction is required for proper SLC2A4 reacycling after insulin stimulation. Expressed specifically in white and brown adipose tissues.

It localises to the cell membrane. Its subcellular location is the endomembrane system. It is found in the cytoplasm. The protein localises to the perinuclear region. In terms of biological role, regulates insulin-mediated adipose tissue glucose uptake and transport by modulation of SLC2A4 recycling. Not required for SLC2A4 membrane fusion upon an initial stimulus, but rather is necessary for proper protein recycling during prolonged insulin stimulation. The sequence is that of Trafficking regulator of GLUT4 1 (Trarg1) from Mus musculus (Mouse).